A 497-amino-acid polypeptide reads, in one-letter code: Glycerol kinase (497 aa).

Thr11 provides a ligand contact to ADP. Positions 11, 12, and 13 each coordinate ATP. Thr11 contributes to the sn-glycerol 3-phosphate binding site. Position 15 (Arg15) interacts with ADP. Residues Arg81, Glu82, Tyr133, and Asp242 each coordinate sn-glycerol 3-phosphate. Residues Arg81, Glu82, Tyr133, Asp242, and Gln243 each contribute to the glycerol site. Residues Thr264 and Gly307 each coordinate ADP. 4 residues coordinate ATP: Thr264, Gly307, Gln311, and Gly412. Positions 412 and 416 each coordinate ADP.

It belongs to the FGGY kinase family.

It carries out the reaction glycerol + ATP = sn-glycerol 3-phosphate + ADP + H(+). It functions in the pathway polyol metabolism; glycerol degradation via glycerol kinase pathway; sn-glycerol 3-phosphate from glycerol: step 1/1. Inhibited by fructose 1,6-bisphosphate (FBP). Key enzyme in the regulation of glycerol uptake and metabolism. Catalyzes the phosphorylation of glycerol to yield sn-glycerol 3-phosphate. The polypeptide is Glycerol kinase (Variovorax paradoxus (strain S110)).